Here is a 350-residue protein sequence, read N- to C-terminus: Phenylalanine--tRNA ligase alpha subunit (350 aa).

E271 lines the Mg(2+) pocket.

This sequence belongs to the class-II aminoacyl-tRNA synthetase family. Phe-tRNA synthetase alpha subunit type 1 subfamily. As to quaternary structure, tetramer of two alpha and two beta subunits. It depends on Mg(2+) as a cofactor.

The protein resides in the cytoplasm. The enzyme catalyses tRNA(Phe) + L-phenylalanine + ATP = L-phenylalanyl-tRNA(Phe) + AMP + diphosphate + H(+). The sequence is that of Phenylalanine--tRNA ligase alpha subunit from Delftia acidovorans (strain DSM 14801 / SPH-1).